A 77-amino-acid polypeptide reads, in one-letter code: MARVCEVTGKGPMVGNKVSHANNRTKRRFLPNLQYRRFWVETENRWIRLRISNAGLRLIDKNGIDVVLADLRARGQA.

The protein belongs to the bacterial ribosomal protein bL28 family.

The protein is Large ribosomal subunit protein bL28 of Albidiferax ferrireducens (strain ATCC BAA-621 / DSM 15236 / T118) (Rhodoferax ferrireducens).